We begin with the raw amino-acid sequence, 324 residues long: Porphobilinogen deaminase 1 (324 aa).

The residue at position 249 (Cys249) is an S-(dipyrrolylmethanemethyl)cysteine.

It belongs to the HMBS family. In terms of assembly, monomer. It depends on dipyrromethane as a cofactor.

The enzyme catalyses 4 porphobilinogen + H2O = hydroxymethylbilane + 4 NH4(+). Its pathway is porphyrin-containing compound metabolism; protoporphyrin-IX biosynthesis; coproporphyrinogen-III from 5-aminolevulinate: step 2/4. Its function is as follows. Tetrapolymerization of the monopyrrole PBG into the hydroxymethylbilane pre-uroporphyrinogen in several discrete steps. The protein is Porphobilinogen deaminase 1 (hemC1) of Streptomyces avermitilis (strain ATCC 31267 / DSM 46492 / JCM 5070 / NBRC 14893 / NCIMB 12804 / NRRL 8165 / MA-4680).